Here is a 509-residue protein sequence, read N- to C-terminus: MKDKKISKSIKMQVQKIPTGIEGFDDVCRGGLPAARSTLVSGTSGTGKTVFSLQYLHHGICNFDEPGIFITFEESPLDIIRNAASFGWDLQKLIDQNKLFILDASPDPDGQDVAGNFDLSGLIERISYAIRKYKAKRVAIDSITAVFQQYDAIYVVRREIFRLIARLKEIGVTTVMTTERVDDYGPIARYGVEEFVSDNVVLLRNVLEAEKRRRTLEVLKLRGTVHMKGEFPFTMGDDGIIVFALGAMRLTQRSSNIRISSGVKDLDEMCGGGYFQDSIILATGATGTGKTMLVSKFIEDAYNNKERAILFAYEESRAQLNRNATSWGIDFEKMENEGLLKIICAYPESTGLEDHLQIIKSQINEFKPKRLAIDSLSALARGVSLNAFRQFVIGVTGYSKQEEIAGFFTNTAEEFMGSHSITDSHISTITDTILLLQYVEIKGEMARAINVFKMRGSWHDKRIREYIITGQGPEIKDSFSNFEQIFSGAPHRVISDQSIPNVFKGIEKN.

KaiC domains are found at residues 1 to 243 and 257 to 509; these read MKDK…IIVF and IRIS…IEKN. ATP contacts are provided by G45, T46, G47, K48, T49, S85, K220, L221, R222, T224, H226, D237, T286, G287, T288, G289, K290, and T291. Residue T49 coordinates Mg(2+). Residues T291 and E314 each coordinate Mg(2+). W327 contacts ATP. S427 carries the post-translational modification Phosphoserine; by autocatalysis. Phosphothreonine; by autocatalysis is present on T428. Positions 447, 453, 454, 455, 457, 459, and 461 each coordinate ATP.

The protein belongs to the KaiC family. As to quaternary structure, homohexamer; hexamerization is dependent on ATP-binding. Component of the KaiBC complex. KaiC interacts with SasA, activating its autokinase function and leading to RpaA activation. Mg(2+) is required as a cofactor. Phosphorylated on serine and threonine residues by autocatalysis. Has a 4 step phosphorylation cycle; the autokinase acts first on Thr-428, then Ser-427. When Ser-427 is modified KaiC switches to an autophosphatase mode, acting first on phospho-Thr-428 then phospho-Ser-427.

The catalysed reaction is L-seryl-[protein] + ATP = O-phospho-L-seryl-[protein] + ADP + H(+). The enzyme catalyses L-threonyl-[protein] + ATP = O-phospho-L-threonyl-[protein] + ADP + H(+). It catalyses the reaction ATP + H2O = ADP + phosphate + H(+). Central component of the KaiBC oscillator complex, which constitutes the main circadian regulator in cyanobacteria. Its composition changes during the circadian cycle to control KaiC phosphorylation. Autophosphorylates and has a weak ATPase activity; ATPase activity defines the circadian period. The sequence is that of Circadian clock oscillator protein KaiC from Prochlorococcus marinus subsp. pastoris (strain CCMP1986 / NIES-2087 / MED4).